Consider the following 185-residue polypeptide: Ribosome-recycling factor (185 aa).

It belongs to the RRF family.

Its subcellular location is the cytoplasm. In terms of biological role, responsible for the release of ribosomes from messenger RNA at the termination of protein biosynthesis. May increase the efficiency of translation by recycling ribosomes from one round of translation to another. This chain is Ribosome-recycling factor, found in Aliarcobacter butzleri (strain RM4018) (Arcobacter butzleri).